A 489-amino-acid chain; its full sequence is Cytochrome P450 monooxygenase trt6 (489 aa).

Residues 10 to 30 (SLWSFGLWILVILSPVLFFAS) traverse the membrane as a helical segment. Asparagine 364 and asparagine 407 each carry an N-linked (GlcNAc...) asparagine glycan. A heme-binding site is contributed by cysteine 430.

This sequence belongs to the cytochrome P450 family. Heme is required as a cofactor.

The protein resides in the membrane. It functions in the pathway secondary metabolite biosynthesis; terpenoid biosynthesis. Functionally, cytochrome P450 monooxygenase; part of the gene cluster that mediates the biosynthesis of terretonin, a fungal meroterpenoid that acts as a mycotoxin. The first step of the pathway is the synthesis of 3,5-dimethylorsellinic acid (DMOA) by the polyketide synthase trt4. DMOA is then prenylated into farnesyl-DMOA by the polyprenyl transferase trt2. Methylation by the methyltransferase trt5 then leads to farnesyl-DMOA methyl ester which is further subject to epoxidation by the FAD-dependent monooxygenase trt8 to yield epoxyfarnesyl-DMOA methyl ester. Cyclization of epoxyfarnesyl-DMOA methyl ester by the terpene cyclase trt1 leads to a tetracycle intermediate which is in turn converted to preterretonin. Dehydrogenase trt9 comes next to transform preterretonin to preterrenoid. The FAD-dependent monooxygenase trt3 is then required for the C-hydroxylation at C16 of preterrenoid to yield terrenoid. The cytochrome P450 trt6 catalyzes three successive oxidations to transform terrenoid into an unstable intermediate, which then undergoes the D-ring expansion and unusual rearrangement of the methoxy group to afford the core skeleton of terretonin. Trt14 catalyzes the D-ring expansion of terretonin involving intramolecular methoxy rearrangement as well as the hydrolysis of the expanded D-ring and the methyl ester moiety. Finally, the nonheme iron-dependent dioxygenase trt7 accomplishes the last two oxidation reactions steps to complete the biosynthesis of terretonin. Terretonin C is produced via spontaneous decarboxylation of the terretonin precursor. Another shunt product of the terretonin biosynthesis is dihydrofarnesyl-DMOA, derived from epoxyfarnesyl-DMOA through hydrolysis of the epoxide. This is Cytochrome P450 monooxygenase trt6 from Aspergillus terreus (strain NIH 2624 / FGSC A1156).